The following is a 258-amino-acid chain: Indole-3-glycerol phosphate synthase (258 aa).

The protein belongs to the TrpC family.

It catalyses the reaction 1-(2-carboxyphenylamino)-1-deoxy-D-ribulose 5-phosphate + H(+) = (1S,2R)-1-C-(indol-3-yl)glycerol 3-phosphate + CO2 + H2O. It functions in the pathway amino-acid biosynthesis; L-tryptophan biosynthesis; L-tryptophan from chorismate: step 4/5. The chain is Indole-3-glycerol phosphate synthase from Campylobacter jejuni (strain RM1221).